A 25-amino-acid chain; its full sequence is Cruzioseptin-13 (25 aa).

Asparagine 25 carries the post-translational modification Asparagine amide.

In terms of tissue distribution, expressed by the skin glands.

Its subcellular location is the secreted. Functionally, has antimicrobial activity. This is Cruzioseptin-13 from Cruziohyla calcarifer (Splendid leaf frog).